The primary structure comprises 145 residues: Large ribosomal subunit protein uL13 (145 aa).

The protein belongs to the universal ribosomal protein uL13 family. Part of the 50S ribosomal subunit.

In terms of biological role, this protein is one of the early assembly proteins of the 50S ribosomal subunit, although it is not seen to bind rRNA by itself. It is important during the early stages of 50S assembly. In Geobacillus sp. (strain WCH70), this protein is Large ribosomal subunit protein uL13.